Here is a 329-residue protein sequence, read N- to C-terminus: Thioredoxin-like fold domain-containing protein MRL7L homolog, chloroplastic (329 aa).

Residues 1-46 (MALQSCCSSSASVPATCSALCLAEATRAASLFVRPRAAARRLVLAR) constitute a chloroplast transit peptide. The tract at residues 58 to 91 (AVQLVLGGRARDDGSESESSDDEDDDEPMQMTDE) is disordered. Residues 72–85 (SESESSDDEDDDEP) are compositionally biased toward acidic residues.

Its subcellular location is the plastid. It is found in the chloroplast stroma. Plays an essential role in early steps of chloroplast development. Involved in the regulation of plastid gene expression. Required for the proper function of the plastid transcriptional machinery and protein accumulation in thylakoid membranes. May function as molecular chaperone to ensure proper organization of the nucleoids in chloroplasts. The chain is Thioredoxin-like fold domain-containing protein MRL7L homolog, chloroplastic from Oryza sativa subsp. japonica (Rice).